The following is a 183-amino-acid chain: Adenylate kinase (183 aa).

An ATP-binding site is contributed by 12-17; that stretch reads GAGKGT. Positions 32–61 are NMP; it reads STGDLLRSEVSAGSALGQEAEAVMNRGELV. Residues T33, R38, 59-61, 86-89, and Q93 contribute to the AMP site; these read ELV and GFPR. An LID region spans residues 127–133; it reads ARGRADD. R128 lines the ATP pocket. Residues R130 and R141 each coordinate AMP. G169 serves as a coordination point for ATP.

This sequence belongs to the adenylate kinase family. In terms of assembly, monomer.

It is found in the cytoplasm. The catalysed reaction is AMP + ATP = 2 ADP. It functions in the pathway purine metabolism; AMP biosynthesis via salvage pathway; AMP from ADP: step 1/1. Its function is as follows. Catalyzes the reversible transfer of the terminal phosphate group between ATP and AMP. Plays an important role in cellular energy homeostasis and in adenine nucleotide metabolism. In Synechococcus sp. (strain WH7803), this protein is Adenylate kinase.